Consider the following 151-residue polypeptide: UPF0178 protein Sde_3033 (151 aa).

Belongs to the UPF0178 family.

In Saccharophagus degradans (strain 2-40 / ATCC 43961 / DSM 17024), this protein is UPF0178 protein Sde_3033.